A 67-amino-acid chain; its full sequence is Conotoxin TsMMSK-B022 (67 aa).

The N-terminal stretch at 1 to 22 (MMSKLGVLLTICLLLFPLTAVS) is a signal peptide. Positions 23–50 (LDGDQPADLPELRAQDFAPERSPWFDPV) are excised as a propeptide. 3 disulfides stabilise this stretch: C53–C65, C54–C61, and C58–C64. At P63 the chain carries 4-hydroxyproline.

Belongs to the conotoxin M superfamily. As to expression, expressed by the venom duct.

The protein resides in the secreted. This is Conotoxin TsMMSK-B022 from Conus tessulatus (Tessellate cone).